The primary structure comprises 192 residues: Archaemetzincin (192 aa).

His-137 provides a ligand contact to Zn(2+). Catalysis depends on Glu-138, which acts as the Proton acceptor. Residues His-141, His-147, Cys-148, Cys-153, Cys-172, and Cys-175 each coordinate Zn(2+).

It belongs to the peptidase M54 family. Monomer. Zn(2+) serves as cofactor.

Probable zinc metalloprotease whose natural substrate is unknown. The sequence is that of Archaemetzincin from Pyrococcus furiosus (strain ATCC 43587 / DSM 3638 / JCM 8422 / Vc1).